Here is an 89-residue protein sequence, read N- to C-terminus: Small ribosomal subunit protein bS16 (89 aa).

Belongs to the bacterial ribosomal protein bS16 family.

This chain is Small ribosomal subunit protein bS16, found in Anaplasma marginale (strain Florida).